A 346-amino-acid chain; its full sequence is tRNA N6-adenosine threonylcarbamoyltransferase (346 aa).

Fe cation is bound by residues H111 and H115. Residues 134–138 (LVSGG), D167, G180, D184, and N280 contribute to the substrate site. D308 lines the Fe cation pocket.

This sequence belongs to the KAE1 / TsaD family. The cofactor is Fe(2+).

The protein localises to the cytoplasm. It carries out the reaction L-threonylcarbamoyladenylate + adenosine(37) in tRNA = N(6)-L-threonylcarbamoyladenosine(37) in tRNA + AMP + H(+). Its function is as follows. Required for the formation of a threonylcarbamoyl group on adenosine at position 37 (t(6)A37) in tRNAs that read codons beginning with adenine. Is involved in the transfer of the threonylcarbamoyl moiety of threonylcarbamoyl-AMP (TC-AMP) to the N6 group of A37, together with TsaE and TsaB. TsaD likely plays a direct catalytic role in this reaction. This is tRNA N6-adenosine threonylcarbamoyltransferase from Crocosphaera subtropica (strain ATCC 51142 / BH68) (Cyanothece sp. (strain ATCC 51142)).